Reading from the N-terminus, the 71-residue chain is MAVEKTNSSSSLAEVIDRILDKGIVVDAWVRVSLVGIELLAIEARIVIASVETYLKYAEAVGLTQSAAMPA.

This sequence belongs to the gas vesicle GvpA family. The gas vesicle shell is 2 nm thick and consists of a single layer of this protein. It forms helical ribs nearly perpendicular to the long axis of the vesicle.

It localises to the gas vesicle shell. Functionally, gas vesicles are hollow, gas filled proteinaceous nanostructures found in some microorganisms. During planktonic growth they allow positioning of the organism at a favorable depth for light or nutrient acquisition. GvpA forms the protein shell. Cluster expression in E.coli (gvpA1-gvpA2-gvpC-gvpN-gvpJ-gvpK-gvpF-gvpG-gvpV-gvpW) allows cells to float and produces irregularly shaped gas vesicles. The protein is Gas vesicle protein A of Nostoc sp. (strain PCC 7120 / SAG 25.82 / UTEX 2576).